Consider the following 347-residue polypeptide: DNA-directed RNA polymerase subunit alpha (347 aa).

Positions 1 to 243 (MLIKQGDRLI…DQISVFINFD (243 aa)) are alpha N-terminal domain (alpha-NTD). The alpha C-terminal domain (alpha-CTD) stretch occupies residues 260 to 347 (VNENLFKGID…EWKRKQQNEA (88 aa)).

This sequence belongs to the RNA polymerase alpha chain family. In terms of assembly, homodimer. The RNAP catalytic core consists of 2 alpha, 1 beta, 1 beta' and 1 omega subunit. When a sigma factor is associated with the core the holoenzyme is formed, which can initiate transcription.

The enzyme catalyses RNA(n) + a ribonucleoside 5'-triphosphate = RNA(n+1) + diphosphate. In terms of biological role, DNA-dependent RNA polymerase catalyzes the transcription of DNA into RNA using the four ribonucleoside triphosphates as substrates. This is DNA-directed RNA polymerase subunit alpha from Nitratidesulfovibrio vulgaris (strain DSM 19637 / Miyazaki F) (Desulfovibrio vulgaris).